The primary structure comprises 446 residues: Ribosomal protein uS12 methylthiotransferase RimO (446 aa).

One can recognise an MTTase N-terminal domain in the interval 10–122 (KTLHMVSLGC…IDELVNEKRS (113 aa)). Residues Cys-19, Cys-53, Cys-85, Cys-154, Cys-158, and Cys-161 each contribute to the [4Fe-4S] cluster site. Positions 140-369 (TGSSYHAYVK…GEIISQTTQE (230 aa)) constitute a Radical SAM core domain. The region spanning 372-446 (ESEVGKTFEV…GDKLLATVIK (75 aa)) is the TRAM domain.

It belongs to the methylthiotransferase family. RimO subfamily. The cofactor is [4Fe-4S] cluster.

It is found in the cytoplasm. The catalysed reaction is L-aspartate(89)-[ribosomal protein uS12]-hydrogen + (sulfur carrier)-SH + AH2 + 2 S-adenosyl-L-methionine = 3-methylsulfanyl-L-aspartate(89)-[ribosomal protein uS12]-hydrogen + (sulfur carrier)-H + 5'-deoxyadenosine + L-methionine + A + S-adenosyl-L-homocysteine + 2 H(+). In terms of biological role, catalyzes the methylthiolation of an aspartic acid residue of ribosomal protein uS12. The polypeptide is Ribosomal protein uS12 methylthiotransferase RimO (Aliarcobacter butzleri (strain RM4018) (Arcobacter butzleri)).